Reading from the N-terminus, the 597-residue chain is Aspartate--tRNA(Asp/Asn) ligase (597 aa).

An L-aspartate-binding site is contributed by Glu-175. An aspartate region spans residues 199 to 202; that stretch reads QQYK. Residues Arg-221 and His-454 each contribute to the L-aspartate site. Residue 221–223 coordinates ATP; sequence RDE. Residue Glu-488 participates in ATP binding. Arg-495 provides a ligand contact to L-aspartate. 540–543 contributes to the ATP binding site; the sequence is GIDR.

It belongs to the class-II aminoacyl-tRNA synthetase family. Type 1 subfamily. As to quaternary structure, homodimer.

It is found in the cytoplasm. It catalyses the reaction tRNA(Asx) + L-aspartate + ATP = L-aspartyl-tRNA(Asx) + AMP + diphosphate. Its function is as follows. Aspartyl-tRNA synthetase with relaxed tRNA specificity since it is able to aspartylate not only its cognate tRNA(Asp) but also tRNA(Asn). Reaction proceeds in two steps: L-aspartate is first activated by ATP to form Asp-AMP and then transferred to the acceptor end of tRNA(Asp/Asn). The sequence is that of Aspartate--tRNA(Asp/Asn) ligase from Bartonella tribocorum (strain CIP 105476 / IBS 506).